The primary structure comprises 368 residues: Probable multidrug ABC transporter permease YbhR (368 aa).

The Cytoplasmic portion of the chain corresponds to 1–24 (MFHRLWTLIRKELQSLLREPQTRA). A helical transmembrane segment spans residues 25–45 (ILILPVLIQVILFPFAATLEV). At 46-173 (TNATIAIYDE…WYNPNLDYKW (128 aa)) the chain is on the periplasmic side. Residues 129–366 (AQIAANYLQQ…SAAYAMFRRK (238 aa)) enclose the ABC transmembrane type-2 domain. A helical transmembrane segment spans residues 174 to 194 (FVVPSLIAMITTIGVMIVTSL). Residues 195–222 (SVAREREQGTLDQLLVSPLTTWQIFIGK) lie on the Cytoplasmic side of the membrane. A helical membrane pass occupies residues 223-243 (AVPALIVATFQATIVLAIGIW). Residues 244 to 253 (AYQIPFAGSL) lie on the Periplasmic side of the membrane. Residues 254–274 (ALFYFTMVIYGLSLVGFGLLI) traverse the membrane as a helical segment. Residues 275-284 (SSLCSTQQQA) lie on the Cytoplasmic side of the membrane. The helical transmembrane segment at 285 to 305 (FIGVFVFMMPAILLSGYVSPV) threads the bilayer. Topologically, residues 306 to 339 (ENMPVWLQNLTWINPIRHFTDITKQIYLKDASLD) are periplasmic. A helical transmembrane segment spans residues 340–360 (IVWNSLWPLLVITATTGSAAY). Over 361–368 (AMFRRKVM) the chain is Cytoplasmic.

This sequence belongs to the ABC-2 integral membrane protein family. As to quaternary structure, the complex is probably composed of two ATP-binding proteins (YbhF) and two transmembrane proteins (YbhR and YbhS).

Its subcellular location is the cell inner membrane. Part of the ABC transporter complex YbhFSR that could be involved in efflux of cefoperazone. Probably involved in the translocation of the substrate across the membrane. The chain is Probable multidrug ABC transporter permease YbhR (ybhR) from Escherichia coli O157:H7.